The primary structure comprises 364 residues: Aminomethyltransferase (364 aa).

The protein belongs to the GcvT family. The glycine cleavage system is composed of four proteins: P, T, L and H.

The catalysed reaction is N(6)-[(R)-S(8)-aminomethyldihydrolipoyl]-L-lysyl-[protein] + (6S)-5,6,7,8-tetrahydrofolate = N(6)-[(R)-dihydrolipoyl]-L-lysyl-[protein] + (6R)-5,10-methylene-5,6,7,8-tetrahydrofolate + NH4(+). Its function is as follows. The glycine cleavage system catalyzes the degradation of glycine. This chain is Aminomethyltransferase, found in Salmonella paratyphi A (strain AKU_12601).